A 645-amino-acid polypeptide reads, in one-letter code: MPPPGDQDCARRRSRRRRRDLLLSQLCFLASVALLLWSLSSLREQKELDLMDLIGEDRKWMVGRKLMQVNDTLTSEDAGLQSSKNCTEPALHEFPRDIFSNEDRRQGAVVLHVLCAMYMFYALAIVCDDFFVPSLEKICERLHLSEDVAGATFMAAGSSAPELFTSVIGVFITKGDVGVGTIVGSAVFNILCIIGVCGLFAGQVVALSSWCLLRDSIYYTLSVVALIVFIYDEKVSWWESLVLVLMYLIYIVIMKYNACIHQCFERRTKGAGNMVNGLANNAEIDDSSNCDATVVLLKKANFHRKASVIMVDELLSAYPHQLSFSEAGLRIMITSHFPPKTRLSMASRMLINERQRLINSRAYTNGESEVAIKIPIKHTVENGTGPSSAPDRGVNGTRRDDIVAETDNETENENEDNENNENDEEEEEDEDDDEGPYTPFDPPSGKLETVKWAFTWPLSFVLYFTVPNCNKPHWEKWFMVTFASSTLWIAAFSYMMVWMVTIIGYTLGIPDVIMGITFLAAGTSVPDCMASLIVARQGMGDMAVSNSIGSNVFDILIGLGLPWALQTLAVDYGSYIRLNSRGLIYSVGLLLASVFVTVFGVHLNKWQLDKKLGCGCLFLYGVFLCFSIMTEFNVFTFVNLPMCGD.

Residues 1 to 43 (MPPPGDQDCARRRSRRRRRDLLLSQLCFLASVALLLWSLSSLR) form the signal peptide. Residues 44–106 (EQKELDLMDL…DIFSNEDRRQ (63 aa)) lie on the Extracellular side of the membrane. N-linked (GlcNAc...) asparagine glycans are attached at residues asparagine 70 and asparagine 85. A helical membrane pass occupies residues 107-127 (GAVVLHVLCAMYMFYALAIVC). Topologically, residues 128–151 (DDFFVPSLEKICERLHLSEDVAGA) are cytoplasmic. An Alpha-1 repeat occupies 148–188 (VAGATFMAAGSSAPELFTSVIGVFITKGDVGVGTIVGSAVF). The helical transmembrane segment at 152–172 (TFMAAGSSAPELFTSVIGVFI) threads the bilayer. Residues 173-181 (TKGDVGVGT) are Extracellular-facing. Residues 182-202 (IVGSAVFNILCIIGVCGLFAG) traverse the membrane as a helical segment. At 203-209 (QVVALSS) the chain is on the cytoplasmic side. Residues 210–230 (WCLLRDSIYYTLSVVALIVFI) traverse the membrane as a helical segment. Over 231–234 (YDEK) the chain is Extracellular. Residues 235-255 (VSWWESLVLVLMYLIYIVIMK) traverse the membrane as a helical segment. The Cytoplasmic segment spans residues 256-486 (YNACIHQCFE…WFMVTFASST (231 aa)). Serine 307 carries the phosphoserine modification. 2 disordered regions span residues 379–398 (TVEN…NGTR) and 404–442 (AETD…PFDP). Over residues 404 to 435 (AETDNETENENEDNENNENDEEEEEDEDDDEG) the composition is skewed to acidic residues. A helical transmembrane segment spans residues 487-507 (LWIAAFSYMMVWMVTIIGYTL). Over 508–512 (GIPDV) the chain is Extracellular. A helical transmembrane segment spans residues 513 to 533 (IMGITFLAAGTSVPDCMASLI). The Alpha-2 repeat unit spans residues 520-551 (AAGTSVPDCMASLIVARQGMGDMAVSNSIGSN). At 534–551 (VARQGMGDMAVSNSIGSN) the chain is on the cytoplasmic side. Residues 552–572 (VFDILIGLGLPWALQTLAVDY) form a helical membrane-spanning segment. Residues 573-582 (GSYIRLNSRG) lie on the Extracellular side of the membrane. A helical transmembrane segment spans residues 583–603 (LIYSVGLLLASVFVTVFGVHL). Residues 604-617 (NKWQLDKKLGCGCL) lie on the Cytoplasmic side of the membrane. A helical membrane pass occupies residues 618 to 638 (FLYGVFLCFSIMTEFNVFTFV). The Extracellular portion of the chain corresponds to 639–645 (NLPMCGD).

Belongs to the Ca(2+):cation antiporter (CaCA) (TC 2.A.19) family. SLC24A subfamily. In terms of tissue distribution, abundant in the brain. Highest levels found in selected thalamic nuclei, hippocampal CA1 neurons and in layer IV of the cerebral cortex. Expressed in dental tissues.

It is found in the cell membrane. It carries out the reaction Ca(2+)(out) + K(+)(out) + 4 Na(+)(in) = Ca(2+)(in) + K(+)(in) + 4 Na(+)(out). Functionally, calcium, potassium:sodium antiporter that transports 1 Ca(2+) and 1 K(+) in exchange for 4 Na(+). This Mus musculus (Mouse) protein is Sodium/potassium/calcium exchanger 3 (Slc24a3).